The chain runs to 119 residues: Defensin-like protein 260 (119 aa).

The N-terminal stretch at 1 to 24 is a signal peptide; the sequence is MKIASLKLLLLVSLLFAVTQNGIS. Disulfide bonds link Cys-44–Cys-99, Cys-63–Cys-79, Cys-69–Cys-83, and Cys-73–Cys-85.

This sequence belongs to the DEFL family.

The protein localises to the secreted. This chain is Defensin-like protein 260, found in Arabidopsis thaliana (Mouse-ear cress).